The primary structure comprises 444 residues: Phosphoglucosamine mutase (444 aa).

Ser102 functions as the Phosphoserine intermediate in the catalytic mechanism. Mg(2+) contacts are provided by Ser102, Asp241, Asp243, and Asp245. At Ser102 the chain carries Phosphoserine.

It belongs to the phosphohexose mutase family. The cofactor is Mg(2+). Activated by phosphorylation.

The catalysed reaction is alpha-D-glucosamine 1-phosphate = D-glucosamine 6-phosphate. Its function is as follows. Catalyzes the conversion of glucosamine-6-phosphate to glucosamine-1-phosphate. The chain is Phosphoglucosamine mutase from Leptothrix cholodnii (strain ATCC 51168 / LMG 8142 / SP-6) (Leptothrix discophora (strain SP-6)).